We begin with the raw amino-acid sequence, 264 residues long: MESGKTASPKSMPKDAQMMAQILKDMGITEYEPRVINQMLEFAFRYVTTILDDAKIYSSHAKKATVDADDVRLAIQCRADQSFTSPPPRDFLLDIARQRNQTPLPLIKPYSGPRLPPDRYCLTAPNYRLKSLQKKASTSAGRITVPRLSVGSVTSRPSTPTLGTPTPQTMSVSTKVGTPMSLTGQRFTVQMPTSQSPAVKASIPATSAVQNVLINPSLIGSKNILITTNMMSSQNTANESSNALKRKREDDDDDDDDDDDYDNL.

At K5 the chain carries N6-acetyllysine. The DNA-binding element occupies Y120 to S137. 4 positions are modified to phosphoserine: S149, S152, S155, and S158. The interval S149–V176 is disordered. Residues G151–V176 show a composition bias toward polar residues. Phosphothreonine occurs at positions 159, 161, 164, and 178. A phosphoserine mark is found at S181 and S196. Positions S232–A243 are enriched in polar residues. The disordered stretch occupies residues S232–L264. The segment covering D250–L264 has biased composition (acidic residues).

This sequence belongs to the TAF9 family. As to quaternary structure, component of the TFIID basal transcription factor complex, composed of TATA-box-binding protein TBP, and a number of TBP-associated factors (TAFs), including TAF1, TAF2, TAF3, TAF4, TAF5, TAF6, TAF7, TAF8, TAF9, TAF10, TAF11, TAF12 and TAF13. Component of the TATA-binding protein-free TAF complex (TFTC), the PCAF histone acetylase complex and the STAGA transcription coactivator-HAT complex. The PCAF complex consists at least of TADA2L/ADA2, SUPT3H/SPT3, TADA3L/ADA3, TAF5L/PAF65-beta, TAF6L/PAF65-alpha, TAF10/TAFII30, TAF12/TAFII20, TAF9/TAFII31 and TRRAP. The STAGA transcription coactivator-HAT complex consists at least of SUPT3H, GCN5L2, SUPT7L, TAF5L, TAF6L, TADA3L, TAD1L, TAF10, TAF12, TRRAP and TAF9. Binds N-terminal domain of p53/TP53 which is essential for transcription. Component of some MLL1/MLL complex, at least composed of the core components KMT2A/MLL1, ASH2L, HCFC1/HCF1, WDR5 and RBBP5, as well as the facultative components BACC1, CHD8, E2F6, HSP70, INO80C, KANSL1, LAS1L, MAX, MCRS1, MGA, MYST1/MOF, PELP1, PHF20, PRP31, RING2, RUVB1/TIP49A, RUVB2/TIP49B, SENP3, TAF1, TAF4, TAF6, TAF7, TAF9 and TEX10. Binds TFIIB and the Herpes simplex virus activator VP16. Forms a heterodimer with TAF6 in a complex with the TAF4B-TAF12 heterodimer. Also interacts with TAF5. Binds directly DNA. Increased DNA binding when complexed with TAF6.

The protein resides in the nucleus. The TFIID basal transcription factor complex plays a major role in the initiation of RNA polymerase II (Pol II)-dependent transcription. TFIID recognizes and binds promoters with or without a TATA box via its subunit TBP, a TATA-box-binding protein, and promotes assembly of the pre-initiation complex (PIC). The TFIID complex consists of TBP and TBP-associated factors (TAFs), including TAF1, TAF2, TAF3, TAF4, TAF5, TAF6, TAF7, TAF8, TAF9, TAF10, TAF11, TAF12 and TAF13. TAF9 is also a component of the TBP-free TAFII complex (TFTC), the PCAF histone acetylase complex and the STAGA transcription coactivator-HAT complex. TAF9 and its paralog TAF9B are involved in transcriptional activation as well as repression of distinct but overlapping sets of genes. Essential for cell viability. May have a role in gene regulation associated with apoptosis. The protein is Transcription initiation factor TFIID subunit 9 (TAF9) of Homo sapiens (Human).